Consider the following 296-residue polypeptide: Cadherin-4 (296 aa).

Cadherin domains are found at residues 1 to 101 (NVPE…RPEF), 102 to 216 (INQV…PPEF), and 217 to 296 (TTST…MLTI). At 1–296 (NVPENSRGPF…ELNRAFMLTI (296 aa)) the chain is on the extracellular side. N-linked (GlcNAc...) asparagine glycans are attached at residues N107 and N236.

Its subcellular location is the cell membrane. Functionally, cadherins are calcium-dependent cell adhesion proteins. They preferentially interact with themselves in a homophilic manner in connecting cells; cadherins may thus contribute to the sorting of heterogeneous cell types. May play an important role in retinal development. The protein is Cadherin-4 (Cdh4) of Rattus norvegicus (Rat).